The following is a 362-amino-acid chain: DNA polymerase IV (362 aa).

The UmuC domain maps to isoleucine 6–glycine 187. The Mg(2+) site is built by aspartate 10 and aspartate 105. Glutamate 106 is a catalytic residue.

The protein belongs to the DNA polymerase type-Y family. As to quaternary structure, monomer. The cofactor is Mg(2+).

The protein resides in the cytoplasm. It carries out the reaction DNA(n) + a 2'-deoxyribonucleoside 5'-triphosphate = DNA(n+1) + diphosphate. Poorly processive, error-prone DNA polymerase involved in untargeted mutagenesis. Copies undamaged DNA at stalled replication forks, which arise in vivo from mismatched or misaligned primer ends. These misaligned primers can be extended by PolIV. Exhibits no 3'-5' exonuclease (proofreading) activity. May be involved in translesional synthesis, in conjunction with the beta clamp from PolIII. This is DNA polymerase IV from Leptospira interrogans serogroup Icterohaemorrhagiae serovar copenhageni (strain Fiocruz L1-130).